The primary structure comprises 152 residues: Cysteine and tyrosine-rich protein 1 (152 aa).

The N-terminal stretch at 1–27 (MDIPRSLRHPEILLVLLLSEITDICQA) is a signal peptide. The Extracellular segment spans residues 28 to 59 (YCEADCKSYCCDGTPPYCCSYYAYIGNVLSGT). Residues 60-80 (AIAGIVFGIVFIMGVIAGIAI) form a helical membrane-spanning segment. Over 81–152 (CICMCMKSSR…PPPYPGPSRK (72 aa)) the chain is Cytoplasmic. The disordered stretch occupies residues 130 to 152 (PYTPTPPMSHYPSPPPYPGPSRK).

The protein belongs to the CYYR1 family.

It localises to the membrane. This Xenopus laevis (African clawed frog) protein is Cysteine and tyrosine-rich protein 1 (cyyr1).